Reading from the N-terminus, the 280-residue chain is Bis(5'-nucleosyl)-tetraphosphatase, symmetrical (280 aa).

It belongs to the Ap4A hydrolase family.

It catalyses the reaction P(1),P(4)-bis(5'-adenosyl) tetraphosphate + H2O = 2 ADP + 2 H(+). In terms of biological role, hydrolyzes diadenosine 5',5'''-P1,P4-tetraphosphate to yield ADP. The chain is Bis(5'-nucleosyl)-tetraphosphatase, symmetrical from Shigella boydii serotype 18 (strain CDC 3083-94 / BS512).